We begin with the raw amino-acid sequence, 443 residues long: Glutamate--tRNA ligase 2 (443 aa).

The 'HIGH' region motif lies at 7–17; that stretch reads PSPTGYLHVGN. The short motif at 236-240 is the 'KMSKS' region element; sequence KISKR. K239 is an ATP binding site.

The protein belongs to the class-I aminoacyl-tRNA synthetase family. Glutamate--tRNA ligase type 1 subfamily. As to quaternary structure, monomer.

It is found in the cytoplasm. It carries out the reaction tRNA(Glu) + L-glutamate + ATP = L-glutamyl-tRNA(Glu) + AMP + diphosphate. Its function is as follows. Catalyzes the attachment of glutamate to tRNA(Glu) in a two-step reaction: glutamate is first activated by ATP to form Glu-AMP and then transferred to the acceptor end of tRNA(Glu). The protein is Glutamate--tRNA ligase 2 of Ehrlichia canis (strain Jake).